Consider the following 519-residue polypeptide: Cytosol aminopeptidase (519 aa).

Ser-42 is modified (phosphoserine). N6-succinyllysine is present on Lys-45. The residue at position 54 (Ser-54) is a Phosphoserine. Lys-61 and Lys-103 each carry N6-succinyllysine. 2 positions are modified to phosphoserine: Ser-180 and Ser-194. Residues Leu-202 and Met-203 each contribute to the Zn(2+) site. Lys-221 bears the N6-acetyllysine; alternate mark. Lys-221 carries the post-translational modification N6-succinyllysine; alternate. A Phosphoserine modification is found at Ser-238. Zn(2+) contacts are provided by Lys-282 and Asp-287. Lys-282, Asp-287, Ser-292, and Lys-294 together coordinate substrate. A Mg(2+)-binding site is contributed by Asp-287. The active site involves Lys-294. Arg-303, Asp-305, Asp-364, and Glu-366 together coordinate Zn(2+). Substrate is bound by residues Asp-305 and Asp-364. Mg(2+) is bound by residues Asp-364 and Glu-366. Residue Arg-368 is part of the active site. The residue at position 455 (Lys-455) is an N6-acetyllysine; alternate. Lys-455 carries the post-translational modification N6-succinyllysine; alternate. At Lys-476 the chain carries N6-succinyllysine. Lys-489 bears the N6-acetyllysine; alternate mark. N6-succinyllysine; alternate is present on Lys-489.

The protein belongs to the peptidase M17 family. As to quaternary structure, homohexamer. Zn(2+) serves as cofactor. Mn(2+) is required as a cofactor.

The protein resides in the cytoplasm. It catalyses the reaction Release of an N-terminal amino acid, Xaa-|-Yaa-, in which Xaa is preferably Leu, but may be other amino acids including Pro although not Arg or Lys, and Yaa may be Pro. Amino acid amides and methyl esters are also readily hydrolyzed, but rates on arylamides are exceedingly low.. The catalysed reaction is an S-substituted L-cysteinylglycine + H2O = an S-substituted L-cysteine + glycine. The enzyme catalyses L-cysteinylglycine + H2O = L-cysteine + glycine. It carries out the reaction S-benzyl-L-cysteinylglycine + H2O = S-benzyl-L-cysteine + glycine. It catalyses the reaction Release of N-terminal proline from a peptide.. Bimane-S-cysteinylglycine-hydrolyzing activity is inhibited by o-phenanthroline or bestatin, and is activated by the addition of zinc chloride. Functionally, cytosolic metallopeptidase that catalyzes the removal of unsubstituted N-terminal hydrophobic amino acids from various peptides. The presence of Zn(2+) ions is essential for the peptidase activity, and the association with other cofactors can modulate the substrate spectificity of the enzyme. For instance, in the presence of Mn(2+), it displays a specific Cys-Gly hydrolyzing activity of Cys-Gly-S-conjugates. Involved in the metabolism of glutathione and in the degradation of glutathione S-conjugates, which may play a role in the control of the cell redox status. The chain is Cytosol aminopeptidase from Rattus norvegicus (Rat).